Consider the following 312-residue polypeptide: Glutathione synthetase (312 aa).

Positions 125–309 (KIFVTEFPDL…IAALFWDAVE (185 aa)) constitute an ATP-grasp domain. ATP is bound at residue 151 to 207 (RREFGDIILKPLYGNGGAGVFHLADGDRNLTSLLEMFGQLFREPFIAQRYLKDVRAG). Glu-280 and Asn-282 together coordinate Mg(2+).

This sequence belongs to the prokaryotic GSH synthase family. The cofactor is Mg(2+). Mn(2+) serves as cofactor.

It carries out the reaction gamma-L-glutamyl-L-cysteine + glycine + ATP = glutathione + ADP + phosphate + H(+). It functions in the pathway sulfur metabolism; glutathione biosynthesis; glutathione from L-cysteine and L-glutamate: step 2/2. The sequence is that of Glutathione synthetase from Brucella melitensis biotype 1 (strain ATCC 23456 / CCUG 17765 / NCTC 10094 / 16M).